Consider the following 373-residue polypeptide: Queuine tRNA-ribosyltransferase (373 aa).

Catalysis depends on aspartate 91, which acts as the Proton acceptor. Substrate contacts are provided by residues 91–95 (DSGGF), aspartate 145, and glutamine 187. An RNA binding region spans residues 245-251 (GVGTPED). Aspartate 264 (nucleophile) is an active-site residue. The tract at residues 269 to 273 (TRNAR) is RNA binding; important for wobble base 34 recognition. Positions 302, 304, 307, and 333 each coordinate Zn(2+).

The protein belongs to the queuine tRNA-ribosyltransferase family. In terms of assembly, homodimer. Within each dimer, one monomer is responsible for RNA recognition and catalysis, while the other monomer binds to the replacement base PreQ1. Zn(2+) is required as a cofactor.

It catalyses the reaction 7-aminomethyl-7-carbaguanine + guanosine(34) in tRNA = 7-aminomethyl-7-carbaguanosine(34) in tRNA + guanine. Its pathway is tRNA modification; tRNA-queuosine biosynthesis. Catalyzes the base-exchange of a guanine (G) residue with the queuine precursor 7-aminomethyl-7-deazaguanine (PreQ1) at position 34 (anticodon wobble position) in tRNAs with GU(N) anticodons (tRNA-Asp, -Asn, -His and -Tyr). Catalysis occurs through a double-displacement mechanism. The nucleophile active site attacks the C1' of nucleotide 34 to detach the guanine base from the RNA, forming a covalent enzyme-RNA intermediate. The proton acceptor active site deprotonates the incoming PreQ1, allowing a nucleophilic attack on the C1' of the ribose to form the product. After dissociation, two additional enzymatic reactions on the tRNA convert PreQ1 to queuine (Q), resulting in the hypermodified nucleoside queuosine (7-(((4,5-cis-dihydroxy-2-cyclopenten-1-yl)amino)methyl)-7-deazaguanosine). The chain is Queuine tRNA-ribosyltransferase from Syntrophobacter fumaroxidans (strain DSM 10017 / MPOB).